A 321-amino-acid chain; its full sequence is Annexin A5 (321 aa).

Annexin repeat units follow at residues 15-86 (FDAR…SLMR), 87-158 (PARI…VLLQ), 170-242 (ALVE…AVVK), and 246-317 (SVPA…LLCG).

The protein belongs to the annexin family.

In terms of biological role, collagen-binding protein. The sequence is that of Annexin A5 (ANXA5) from Gallus gallus (Chicken).